Consider the following 416-residue polypeptide: MIWTLAPFVALLPLVTAQQVGTTADAHPRLTTYKCTSQNGCTRQNTSVVLDAATHFIHKKGTQTSCTNSNGLDTAICPDKQTCADNCVVDGITDYASYGVQTKNDTLTLQQYLQTGNATKSLSPRVYLLAEDGENYSMLKLLNQEFTFDVDASTLVCGMNGALYLSEMEASGGKSSLNQAGAKYGTGYCDAQCYTTPWINGEGNTESVGSCCQEMDIWEANARATGLTPHPCNTTGLYECSGSGCGDSGVCDKAGCGFNPYGLGAKDYYGYGLKVNTNETFTVVTQFLTNDNTTSGQLSEIRRLYIQNGQVIQNAAVTSGGKTVDSITKDFCSGEGSAFNRLGGLEEMGHALGRGMVLALSIWNDAGSFMQWLDGGSAGPCNATEGNPALIEKLYPDTHVKFSKIRWGDIGSTYRH.

Residues 1-17 (MIWTLAPFVALLPLVTA) form the signal peptide. Residues asparagine 45, asparagine 104, asparagine 117, and asparagine 135 are each glycosylated (N-linked (GlcNAc...) asparagine). Glutamate 214 acts as the Nucleophile in catalysis. The active-site Proton donor is glutamate 219. Residues asparagine 233, asparagine 278, asparagine 292, and asparagine 382 are each glycosylated (N-linked (GlcNAc...) asparagine).

The protein belongs to the glycosyl hydrolase 7 (cellulase C) family.

The protein resides in the secreted. The enzyme catalyses Endohydrolysis of (1-&gt;4)-beta-D-glucosidic linkages in cellulose, lichenin and cereal beta-D-glucans.. Functionally, has endoglucanase activity on substrates containing beta-1,4 glycosidic bonds, like in carboxymethylcellulose (CMC), hydroxyethylcellulose (HEC) and beta-glucan. Involved in the degradation of complex natural cellulosic substrates. In Aspergillus flavus (strain ATCC 200026 / FGSC A1120 / IAM 13836 / NRRL 3357 / JCM 12722 / SRRC 167), this protein is Probable endo-beta-1,4-glucanase celB (celB).